An 82-amino-acid polypeptide reads, in one-letter code: Small ribosomal subunit protein uS15 (82 aa).

This sequence belongs to the universal ribosomal protein uS15 family. As to quaternary structure, part of the 30S ribosomal subunit. Forms a bridge to the 50S subunit in the 70S ribosome, contacting the 23S rRNA.

In terms of biological role, one of the primary rRNA binding proteins, it binds directly to 16S rRNA where it helps nucleate assembly of the platform of the 30S subunit by binding and bridging several RNA helices of the 16S rRNA. Its function is as follows. Forms an intersubunit bridge (bridge B4) with the 23S rRNA of the 50S subunit in the ribosome. This is Small ribosomal subunit protein uS15 from Pelagibacter ubique (strain HTCC1062).